The primary structure comprises 514 residues: Maturase K (514 aa).

Belongs to the intron maturase 2 family. MatK subfamily.

Its subcellular location is the plastid. The protein localises to the chloroplast. In terms of biological role, usually encoded in the trnK tRNA gene intron. Probably assists in splicing its own and other chloroplast group II introns. The protein is Maturase K of Tsuga canadensis (Eastern hemlock).